The sequence spans 195 residues: Peptide methionine sulfoxide reductase MsrA 2 (195 aa).

C18 is an active-site residue.

This sequence belongs to the MsrA Met sulfoxide reductase family.

It carries out the reaction L-methionyl-[protein] + [thioredoxin]-disulfide + H2O = L-methionyl-(S)-S-oxide-[protein] + [thioredoxin]-dithiol. It catalyses the reaction [thioredoxin]-disulfide + L-methionine + H2O = L-methionine (S)-S-oxide + [thioredoxin]-dithiol. In terms of biological role, has an important function as a repair enzyme for proteins that have been inactivated by oxidation. Catalyzes the reversible oxidation-reduction of methionine sulfoxide in proteins to methionine. This Mesorhizobium japonicum (strain LMG 29417 / CECT 9101 / MAFF 303099) (Mesorhizobium loti (strain MAFF 303099)) protein is Peptide methionine sulfoxide reductase MsrA 2 (msrA2).